The following is a 128-amino-acid chain: Large ribosomal subunit protein bL17 (128 aa).

It belongs to the bacterial ribosomal protein bL17 family. In terms of assembly, part of the 50S ribosomal subunit. Contacts protein L32.

The chain is Large ribosomal subunit protein bL17 from Enterobacter sp. (strain 638).